A 391-amino-acid chain; its full sequence is Succinate--CoA ligase [ADP-forming] subunit beta (391 aa).

Residues 9–248 form the ATP-grasp domain; the sequence is KDILRKFGVS…TGEEDPFEVE (240 aa). Residues Lys-50, 57 to 59, Glu-103, Met-106, and Glu-111 contribute to the ATP site; that span reads GRG. Mg(2+)-binding residues include Asn-203 and Asp-217. Residues Asn-268 and 325 to 327 contribute to the substrate site; that span reads GIV.

The protein belongs to the succinate/malate CoA ligase beta subunit family. In terms of assembly, heterotetramer of two alpha and two beta subunits. The cofactor is Mg(2+).

It catalyses the reaction succinate + ATP + CoA = succinyl-CoA + ADP + phosphate. The catalysed reaction is GTP + succinate + CoA = succinyl-CoA + GDP + phosphate. It participates in carbohydrate metabolism; tricarboxylic acid cycle; succinate from succinyl-CoA (ligase route): step 1/1. Its function is as follows. Succinyl-CoA synthetase functions in the citric acid cycle (TCA), coupling the hydrolysis of succinyl-CoA to the synthesis of either ATP or GTP and thus represents the only step of substrate-level phosphorylation in the TCA. The beta subunit provides nucleotide specificity of the enzyme and binds the substrate succinate, while the binding sites for coenzyme A and phosphate are found in the alpha subunit. The sequence is that of Succinate--CoA ligase [ADP-forming] subunit beta from Chlorobium phaeobacteroides (strain BS1).